The following is a 499-amino-acid chain: MEKKYVLAIDQGTTSSRAMLFDRQGKVAGVAQREFGQIFPQPGWVEHNPREIMTSVYTTITELLNNAQIDAREISGIGITNQRETAVVWDKATGQPIYNAIVWQSRQTKDICTQLKEAGHEQMVRDKTGLLIDAYFSGTKVKWILDHVDGARERARKGELAFGTIDSWLIWNLTGGKVHVTDYTNASRTMMYNIHTLEWDAELLEMLDVPAQMLPEVRSSSEVYGMTQTQYFYGEQVPIAGIAGDQQAALFGQACFEPGIAKNTYGTGCFMLMNTGDKAVASKAGLLTTIAWGIDGKVEYALEGAIFVAGSVVQWLRDGLRMFGKASDSQAYAERAGDNDGVYFVPAFVGLGAPYWRSDIRGAVFGLTRGTSKEHFVRAAVESMAYQTRDVLTAMQSDSGIELKELRADGGAIANDFMAQFQSDILNVPVLRPEVAETTALGAAYLAGLATGFWSSREEIAKQWAVDRRFEPNMPEERREQLYAGWQQAVEATMGFRIS.

Thr13 is an ADP binding site. ATP-binding residues include Thr13, Thr14, and Ser15. Thr13 contributes to the sn-glycerol 3-phosphate binding site. Arg17 is an ADP binding site. Sn-glycerol 3-phosphate contacts are provided by Arg83, Glu84, Tyr135, and Asp245. Arg83, Glu84, Tyr135, Asp245, and Gln246 together coordinate glycerol. Residues Thr267 and Gly310 each coordinate ADP. ATP-binding residues include Thr267, Gly310, Gln314, and Gly411. ADP is bound by residues Gly411 and Asn415.

This sequence belongs to the FGGY kinase family.

It catalyses the reaction glycerol + ATP = sn-glycerol 3-phosphate + ADP + H(+). The protein operates within polyol metabolism; glycerol degradation via glycerol kinase pathway; sn-glycerol 3-phosphate from glycerol: step 1/1. Inhibited by fructose 1,6-bisphosphate (FBP). Key enzyme in the regulation of glycerol uptake and metabolism. Catalyzes the phosphorylation of glycerol to yield sn-glycerol 3-phosphate. The protein is Glycerol kinase of Xanthomonas campestris pv. campestris (strain 8004).